Reading from the N-terminus, the 333-residue chain is Eukaryotic translation initiation factor 2 subunit 2 (333 aa).

2 disordered regions span residues methionine 1–methionine 120 and isoleucine 139–proline 165. Serine 2 bears the N-acetylserine mark. Residue serine 2 is modified to Phosphoserine. Serine 13 is subject to Phosphoserine; by PKC; in vitro. A compositionally biased stretch (basic residues) spans serine 13–proline 22. Threonine 36 is modified (phosphothreonine). The span at glutamate 40–aspartate 51 shows a compositional bias: basic and acidic residues. Serine 67 carries the post-translational modification Phosphoserine; by CK2. Over residues glutamate 96–asparagine 105 the composition is skewed to basic and acidic residues. Lysine 102 participates in a covalent cross-link: Glycyl lysine isopeptide (Lys-Gly) (interchain with G-Cter in SUMO2). 2 stretches are compositionally biased toward acidic residues: residues aspartate 106 to aspartate 118 and isoleucine 139 to glutamate 149. Phosphoserine is present on serine 158. Position 218 is a phosphoserine; by PKA; in vitro (serine 218). An N6-acetyllysine mark is found at lysine 265 and lysine 293. A C4-type zinc finger spans residues cysteine 281 to cysteine 305.

This sequence belongs to the eIF-2-beta/eIF-5 family. As to quaternary structure, eukaryotic translation initiation factor 2 eIF2 is a heterotrimeric complex composed of an alpha (EIF2S1), a beta (EIF2S2) and a gamma (EIF2S3) chain. eIF2 is member of the 43S pre-initiation complex (43S PIC). eIF2 forms a complex with at least CELF1/CUGBP1, CALR, CALR3, EIF2S1, EIF2S2, HSP90B1 and HSPA5. Interacts with BZW2/5MP1. Interacts with EIF5. The N-terminus is blocked.

The protein localises to the cytoplasm. It localises to the cytosol. Component of the eIF2 complex that functions in the early steps of protein synthesis by forming a ternary complex with GTP and initiator tRNA. This complex binds to a 40S ribosomal subunit, followed by mRNA binding to form the 43S pre-initiation complex (43S PIC). Junction of the 60S ribosomal subunit to form the 80S initiation complex is preceded by hydrolysis of the GTP bound to eIF2 and release of an eIF2-GDP binary complex. In order for eIF2 to recycle and catalyze another round of initiation, the GDP bound to eIF2 must exchange with GTP by way of a reaction catalyzed by eIF2B. This is Eukaryotic translation initiation factor 2 subunit 2 (EIF2S2) from Oryctolagus cuniculus (Rabbit).